Here is a 334-residue protein sequence, read N- to C-terminus: MIDFSNFYQLIAKSPLSHWLETLPAQVAAWQRDALHGKFREWERAVEFLPELTPWRLDLLHSVTAESETPLSEGHQRRIENLLKNLMPWRKGPYSLYGINIDTEWRSDWKWERVLPHLSDLTGRTILDVGCGSGYHMWRMIGAGAHLAVGIDPTQLFLCQFEAVRKLLGNDQRAHLLPLGIEQLPALEAFDTVFSMGVLYHRRSPLDHLWQLKDQLAPGGELVLETLVVEGDENTVLVPGDRYAQMRNVYFIPSAAALKMWLEKCGFIDVRIVDACVTSTEEQRRTEWMTTESLADFLDPQDQRKTVEGYPAPLRAVIIATKPETQQSLAKKAR.

Carboxy-S-adenosyl-L-methionine is bound by residues lysine 91, tryptophan 105, lysine 110, glycine 130, 152-154 (DPT), 181-182 (IE), methionine 196, tyrosine 200, and arginine 315.

It belongs to the class I-like SAM-binding methyltransferase superfamily. CmoB family. As to quaternary structure, homotetramer.

The enzyme catalyses carboxy-S-adenosyl-L-methionine + 5-hydroxyuridine(34) in tRNA = 5-carboxymethoxyuridine(34) in tRNA + S-adenosyl-L-homocysteine + H(+). In terms of biological role, catalyzes carboxymethyl transfer from carboxy-S-adenosyl-L-methionine (Cx-SAM) to 5-hydroxyuridine (ho5U) to form 5-carboxymethoxyuridine (cmo5U) at position 34 in tRNAs. This is tRNA U34 carboxymethyltransferase from Klebsiella pneumoniae subsp. pneumoniae (strain ATCC 700721 / MGH 78578).